The following is a 479-amino-acid chain: Ankyrin repeat, SAM and basic leucine zipper domain-containing protein 1 (479 aa).

2 positions are modified to phosphoserine: Ser22 and Ser24. ANK repeat units lie at residues 49-78 (EKNETFKKALTTGDILLVKELLNSGISVDS), 82-111 (YGWTPLMYAASVSNVELVRVLLDRGANASF), 114-148 (DKQTILITACSARGSEEQILKCVELLLSRNADPNV), 152-181 (RLMTPIMYAARDGHTQVVALLVAHGAEVNT), 185-214 (NGYTALTWAARQGHKNVVLKLLELGANKML), and 218-247 (DGKTPSEIAKRNKHVEIFSFLSLTLNPLEG). The region spanning 276 to 338 (SYTALGDLEI…KILDALKELQ (63 aa)) is the SAM domain.

As to quaternary structure, interacts with DDX4, PIWIL1, RANBP9 and TDRD1.

The protein localises to the cytoplasm. Its function is as follows. Plays a central role during spermatogenesis by repressing transposable elements and preventing their mobilization, which is essential for the germline integrity. Acts via the piRNA metabolic process, which mediates the repression of transposable elements during meiosis by forming complexes composed of piRNAs and Piwi proteins and governs the methylation and subsequent repression of transposons. Its association with pi-bodies suggests a participation in the primary piRNAs metabolic process. Required prior to the pachytene stage to facilitate the production of multiple types of piRNAs, including those associated with repeats involved in the regulation of retrotransposons. May act by mediating protein-protein interactions during germ cell maturation. The protein is Ankyrin repeat, SAM and basic leucine zipper domain-containing protein 1 (ASZ1) of Rhinolophus ferrumequinum (Greater horseshoe bat).